A 461-amino-acid chain; its full sequence is Bifunctional protein GlmU (461 aa).

The tract at residues Met-1–Arg-229 is pyrophosphorylase. UDP-N-acetyl-alpha-D-glucosamine contacts are provided by residues Leu-8–Gly-11, Lys-22, Gln-72, and Gly-77–Thr-78. Asp-102 provides a ligand contact to Mg(2+). UDP-N-acetyl-alpha-D-glucosamine contacts are provided by Gly-139, Glu-154, Asn-169, and Asn-227. Residue Asn-227 participates in Mg(2+) binding. A linker region spans residues Ile-230–Asn-250. The segment at Gly-251–Glu-461 is N-acetyltransferase. Arg-332 and Lys-350 together coordinate UDP-N-acetyl-alpha-D-glucosamine. His-362 acts as the Proton acceptor in catalysis. UDP-N-acetyl-alpha-D-glucosamine contacts are provided by Tyr-365 and Asn-376. Acetyl-CoA contacts are provided by residues Asn-385–Tyr-386, Ala-422, and Arg-439.

It in the N-terminal section; belongs to the N-acetylglucosamine-1-phosphate uridyltransferase family. The protein in the C-terminal section; belongs to the transferase hexapeptide repeat family. In terms of assembly, homotrimer. It depends on Mg(2+) as a cofactor.

It is found in the cytoplasm. It carries out the reaction alpha-D-glucosamine 1-phosphate + acetyl-CoA = N-acetyl-alpha-D-glucosamine 1-phosphate + CoA + H(+). The catalysed reaction is N-acetyl-alpha-D-glucosamine 1-phosphate + UTP + H(+) = UDP-N-acetyl-alpha-D-glucosamine + diphosphate. The protein operates within nucleotide-sugar biosynthesis; UDP-N-acetyl-alpha-D-glucosamine biosynthesis; N-acetyl-alpha-D-glucosamine 1-phosphate from alpha-D-glucosamine 6-phosphate (route II): step 2/2. It participates in nucleotide-sugar biosynthesis; UDP-N-acetyl-alpha-D-glucosamine biosynthesis; UDP-N-acetyl-alpha-D-glucosamine from N-acetyl-alpha-D-glucosamine 1-phosphate: step 1/1. Its pathway is bacterial outer membrane biogenesis; LPS lipid A biosynthesis. Functionally, catalyzes the last two sequential reactions in the de novo biosynthetic pathway for UDP-N-acetylglucosamine (UDP-GlcNAc). The C-terminal domain catalyzes the transfer of acetyl group from acetyl coenzyme A to glucosamine-1-phosphate (GlcN-1-P) to produce N-acetylglucosamine-1-phosphate (GlcNAc-1-P), which is converted into UDP-GlcNAc by the transfer of uridine 5-monophosphate (from uridine 5-triphosphate), a reaction catalyzed by the N-terminal domain. The polypeptide is Bifunctional protein GlmU (Lactobacillus johnsonii (strain CNCM I-12250 / La1 / NCC 533)).